The following is a 358-amino-acid chain: Uroporphyrinogen decarboxylase (358 aa).

Residues 36–40, aspartate 85, tyrosine 160, serine 215, and histidine 338 each bind substrate; that span reads RQAGR.

This sequence belongs to the uroporphyrinogen decarboxylase family. As to quaternary structure, homodimer.

The protein resides in the cytoplasm. The enzyme catalyses uroporphyrinogen III + 4 H(+) = coproporphyrinogen III + 4 CO2. It participates in porphyrin-containing compound metabolism; protoporphyrin-IX biosynthesis; coproporphyrinogen-III from 5-aminolevulinate: step 4/4. In terms of biological role, catalyzes the decarboxylation of four acetate groups of uroporphyrinogen-III to yield coproporphyrinogen-III. The protein is Uroporphyrinogen decarboxylase of Corynebacterium glutamicum (strain ATCC 13032 / DSM 20300 / JCM 1318 / BCRC 11384 / CCUG 27702 / LMG 3730 / NBRC 12168 / NCIMB 10025 / NRRL B-2784 / 534).